The sequence spans 273 residues: Putative pyruvate, phosphate dikinase regulatory protein (273 aa).

151 to 158 contributes to the ADP binding site; that stretch reads GVSRTSKT.

It belongs to the pyruvate, phosphate/water dikinase regulatory protein family. PDRP subfamily.

The catalysed reaction is N(tele)-phospho-L-histidyl/L-threonyl-[pyruvate, phosphate dikinase] + ADP = N(tele)-phospho-L-histidyl/O-phospho-L-threonyl-[pyruvate, phosphate dikinase] + AMP + H(+). The enzyme catalyses N(tele)-phospho-L-histidyl/O-phospho-L-threonyl-[pyruvate, phosphate dikinase] + phosphate + H(+) = N(tele)-phospho-L-histidyl/L-threonyl-[pyruvate, phosphate dikinase] + diphosphate. In terms of biological role, bifunctional serine/threonine kinase and phosphorylase involved in the regulation of the pyruvate, phosphate dikinase (PPDK) by catalyzing its phosphorylation/dephosphorylation. In Desulfitobacterium hafniense (strain DSM 10664 / DCB-2), this protein is Putative pyruvate, phosphate dikinase regulatory protein.